Here is a 526-residue protein sequence, read N- to C-terminus: Sterol 14-alpha demethylase CYP51A (526 aa).

A helical transmembrane segment spans residues 27 to 47; the sequence is IGFAVFLVLSVVLNVLNQLLF. Tyr-123 is a lanosterol binding site. Cys-470 contributes to the heme binding site.

It belongs to the cytochrome P450 family. Heme serves as cofactor.

The protein localises to the endoplasmic reticulum membrane. It catalyses the reaction a 14alpha-methyl steroid + 3 reduced [NADPH--hemoprotein reductase] + 3 O2 = a Delta(14) steroid + formate + 3 oxidized [NADPH--hemoprotein reductase] + 4 H2O + 4 H(+). The catalysed reaction is a 14alpha-methyl steroid + reduced [NADPH--hemoprotein reductase] + O2 = a 14alpha-hydroxymethyl steroid + oxidized [NADPH--hemoprotein reductase] + H2O + H(+). The enzyme catalyses a 14alpha-hydroxymethyl steroid + reduced [NADPH--hemoprotein reductase] + O2 = a 14alpha-formyl steroid + oxidized [NADPH--hemoprotein reductase] + 2 H2O + H(+). It carries out the reaction a 14alpha-formyl steroid + reduced [NADPH--hemoprotein reductase] + O2 = a Delta(14) steroid + formate + oxidized [NADPH--hemoprotein reductase] + H2O + 2 H(+). It catalyses the reaction lanosterol + 3 reduced [NADPH--hemoprotein reductase] + 3 O2 = 4,4-dimethyl-5alpha-cholesta-8,14,24-trien-3beta-ol + formate + 3 oxidized [NADPH--hemoprotein reductase] + 4 H2O + 4 H(+). The catalysed reaction is lanosterol + reduced [NADPH--hemoprotein reductase] + O2 = 32-hydroxylanosterol + oxidized [NADPH--hemoprotein reductase] + H2O + H(+). The enzyme catalyses 32-hydroxylanosterol + reduced [NADPH--hemoprotein reductase] + O2 = 32-oxolanosterol + oxidized [NADPH--hemoprotein reductase] + 2 H2O + H(+). It carries out the reaction 32-oxolanosterol + reduced [NADPH--hemoprotein reductase] + O2 = 4,4-dimethyl-5alpha-cholesta-8,14,24-trien-3beta-ol + formate + oxidized [NADPH--hemoprotein reductase] + H2O + 2 H(+). It catalyses the reaction eburicol + 3 reduced [NADPH--hemoprotein reductase] + 3 O2 = 14-demethyleburicol + formate + 3 oxidized [NADPH--hemoprotein reductase] + 4 H2O + 4 H(+). The catalysed reaction is eburicol + reduced [NADPH--hemoprotein reductase] + O2 = 32-hydroxyeburicol + oxidized [NADPH--hemoprotein reductase] + H2O + H(+). The enzyme catalyses 32-hydroxyeburicol + reduced [NADPH--hemoprotein reductase] + O2 = 32-oxoeburicol + oxidized [NADPH--hemoprotein reductase] + 2 H2O + H(+). It carries out the reaction 32-oxoeburicol + reduced [NADPH--hemoprotein reductase] + O2 = 14-demethyleburicol + formate + oxidized [NADPH--hemoprotein reductase] + H2O + 2 H(+). It functions in the pathway steroid metabolism; ergosterol biosynthesis. In terms of biological role, together with cyp51A and cyp51C, encodes the sterol 14alpha-demethylase that plays a critical role in the third module of ergosterol biosynthesis pathway, being ergosterol the major sterol component in fungal membranes that participates in a variety of functions. Essential for ascospore production. The third module or late pathway involves the ergosterol synthesis itself through consecutive reactions that mainly occur in the endoplasmic reticulum (ER) membrane. In filamentous fungi, during the initial step of this module, lanosterol (lanosta-8,24-dien-3beta-ol) can be metabolized to eburicol. Sterol 14alpha-demethylase catalyzes the three-step oxidative removal of the 14alpha-methyl group (C-32) of both these sterols in the form of formate, and converts eburicol and lanosterol to 14-demethyleburicol (4,4,24-trimethylergosta-8,14,24(28)-trienol) and 4,4-dimethyl-5alpha-cholesta-8,14,24-trien-3beta-ol, respectively, which are further metabolized by other enzymes in the pathway to ergosterol. Can also use substrates not intrinsic to fungi, such as 24,25-dihydrolanosterol (DHL), producing 4,4'-dimethyl-8,14-cholestadien-3-beta-ol, but at lower rates than the endogenous substrates. This Gibberella zeae (strain ATCC MYA-4620 / CBS 123657 / FGSC 9075 / NRRL 31084 / PH-1) (Wheat head blight fungus) protein is Sterol 14-alpha demethylase CYP51A.